Consider the following 579-residue polypeptide: Mycobactin import ATP-binding/permease protein IrtB (579 aa).

Residues 1-16 (MIRTWIALVPNDHRAR) are Cytoplasmic-facing. A helical transmembrane segment spans residues 17–37 (LIGFALLAFCSVVARAVGTVL). An ABC transmembrane type-1 domain is found at 17–299 (LIGFALLAFC…VSELAPALES (283 aa)). The Periplasmic segment spans residues 38–52 (LVPLMAALFGEAPQR). The helical transmembrane segment at 53-73 (AWLWLGWLSAATVAGWVLDAV) threads the bilayer. The Cytoplasmic portion of the chain corresponds to 74–123 (TARIGIELGFAVLNHTQHDVADRLPVVRLDWFTAENTATARQAIAATGPE). A helical membrane pass occupies residues 124–146 (LVGLVVNLVTPLTSAILLPAVIA). Residues 147 to 155 (LALLPISWQ) lie on the Periplasmic side of the membrane. Residues 156–178 (LGVAALAGVPLLLGALWASAAFA) traverse the membrane as a helical segment. Residues 179-237 (RRADTAADKANTALTERIIEFARTQQALRAARRVEPARSLVGNALASQHTATMRLLGMQ) lie on the Cytoplasmic side of the membrane. A helical transmembrane segment spans residues 238–258 (IPGQLLFSIASQLALIVLAGT). The Periplasmic segment spans residues 259–579 (TAALTITGTL…EAAEWQILAE (321 aa)). Residues 332 to 567 (IEFDDVAFGY…GGRFSQFWRQ (236 aa)) form the ABC transporter domain. 366 to 373 (GPSGCGKS) is an ATP binding site.

It belongs to the ABC transporter superfamily. Siderophore-Fe(3+) uptake transporter (SIUT) (TC 3.A.1.21) family. As to quaternary structure, forms a heterodimer with IrtA.

Its subcellular location is the cell inner membrane. Part of the ABC transporter complex IrtAB involved in the import of iron-bound mycobactin (Fe-MBT) and carboxymycobactin (Fe-cMBT). Transmembrane domains (TMD) form a pore in the membrane and the ATP-binding domain (NBD) is responsible for energy generation. The chain is Mycobactin import ATP-binding/permease protein IrtB (irtB) from Mycobacterium bovis (strain ATCC BAA-935 / AF2122/97).